A 230-amino-acid polypeptide reads, in one-letter code: Exosome complex component Rrp4 (230 aa).

The 70-residue stretch at Asn60–Lys129 folds into the S1 motif domain. In terms of domain architecture, KH spans Glu137–Ile195.

The protein belongs to the RRP4 family. In terms of assembly, component of the archaeal exosome complex. Forms a trimer of Rrp4 and/or Csl4 subunits. The trimer associates with a hexameric ring-like arrangement composed of 3 Rrp41-Rrp42 heterodimers.

It is found in the cytoplasm. Functionally, non-catalytic component of the exosome, which is a complex involved in RNA degradation. Increases the RNA binding and the efficiency of RNA degradation. Confers strong poly(A) specificity to the exosome. The chain is Exosome complex component Rrp4 from Picrophilus torridus (strain ATCC 700027 / DSM 9790 / JCM 10055 / NBRC 100828 / KAW 2/3).